The chain runs to 339 residues: Glycerol-3-phosphate dehydrogenase [NAD(P)+] (339 aa).

Residues Ser15, Tyr16, His36, and Lys110 each contribute to the NADPH site. 3 residues coordinate sn-glycerol 3-phosphate: Lys110, Gly139, and Thr141. NADPH is bound at residue Ala143. Lys195, Asp248, Ser258, Arg259, and Asn260 together coordinate sn-glycerol 3-phosphate. Residue Lys195 is the Proton acceptor of the active site. Residue Arg259 coordinates NADPH. Positions 283 and 285 each coordinate NADPH.

The protein belongs to the NAD-dependent glycerol-3-phosphate dehydrogenase family.

The protein localises to the cytoplasm. It catalyses the reaction sn-glycerol 3-phosphate + NAD(+) = dihydroxyacetone phosphate + NADH + H(+). The enzyme catalyses sn-glycerol 3-phosphate + NADP(+) = dihydroxyacetone phosphate + NADPH + H(+). It functions in the pathway membrane lipid metabolism; glycerophospholipid metabolism. Its function is as follows. Catalyzes the reduction of the glycolytic intermediate dihydroxyacetone phosphate (DHAP) to sn-glycerol 3-phosphate (G3P), the key precursor for phospholipid synthesis. The sequence is that of Glycerol-3-phosphate dehydrogenase [NAD(P)+] from Pectobacterium atrosepticum (strain SCRI 1043 / ATCC BAA-672) (Erwinia carotovora subsp. atroseptica).